We begin with the raw amino-acid sequence, 504 residues long: Probable cytosol aminopeptidase (504 aa).

Mn(2+) contacts are provided by Lys-272 and Asp-277. Lys-284 is a catalytic residue. Positions 295, 354, and 356 each coordinate Mn(2+). Arg-358 is an active-site residue.

Belongs to the peptidase M17 family. Requires Mn(2+) as cofactor.

It is found in the cytoplasm. It catalyses the reaction Release of an N-terminal amino acid, Xaa-|-Yaa-, in which Xaa is preferably Leu, but may be other amino acids including Pro although not Arg or Lys, and Yaa may be Pro. Amino acid amides and methyl esters are also readily hydrolyzed, but rates on arylamides are exceedingly low.. The catalysed reaction is Release of an N-terminal amino acid, preferentially leucine, but not glutamic or aspartic acids.. In terms of biological role, presumably involved in the processing and regular turnover of intracellular proteins. Catalyzes the removal of unsubstituted N-terminal amino acids from various peptides. This chain is Probable cytosol aminopeptidase, found in Chlorobaculum tepidum (strain ATCC 49652 / DSM 12025 / NBRC 103806 / TLS) (Chlorobium tepidum).